The chain runs to 142 residues: Galactose-binding lectin (142 aa).

Residues 1–141 (TYAEVESFGV…GTDIWDLLLL (141 aa)) enclose the Galectin domain.

Homotetramer.

Cytotoxic activity against L.infantum promastigotes is completely inhibited by D-galactose. Inhibition activity against biofilm formation by S.aureus and S.epidermidis is inhibited by alpha-lactose. Hemagglutination activity is inhibited by alpha-lactose (MIC=100 mM), beta-lactose (MIC=100 mM), lactulose (MIC=100 mM), bovine submaxillary mucin (BSM) (MIC=32 ug/ml), fetuin (MIC=16 ug/ml), porcine stomach mucin (PSM) type 2 (MIC=8 ug/ml) and PSM type 3 (MIC=8 ug/ml). Galactose-binding lectin. Displays antibacterial and hemagglutinin activity. Inhibits the growth of L.infantum promastigotes by damaging their membrane integrity and inducing cell apoptosis via the production of reactive oxygen species (ROS). Inhibition of L.infantum promastigotes appears to increase with time (MIC=1.2 uM/ml after 24 hours, MIC=0.9 uM/ml after 48 hours and MIC=0.6 uM/ml after 72 hours). Agglutinates Gram-negative and Gram-positive bacteria including E.coli, S.aureus and S.epidermidis, and inhibits biofilm formation by S.aureus and S.epidermidis. Displays hemagglutination activity towards all types of human erythrocytes (O, A and B) and rabbit erythrocytes. In Chondrilla caribensis (Chicken liver sponge), this protein is Galactose-binding lectin.